Reading from the N-terminus, the 68-residue chain is Neuronal regeneration-related protein (68 aa).

Positions 21–54 (MEGRLPKGRLPVPKEVNRKKNDETNAASLTPLGS) are disordered. Positions 44-54 (TNAASLTPLGS) are enriched in polar residues.

In terms of assembly, interacts with the latency-associated peptides (LAP) of TGFB1 and TGFB2; the interaction results in a decrease in TGFB autoinduction. Interacts with FLNA. Post-translationally, phosphorylated on Ser-59. Phosphorylation decreases stability and activity.

Its subcellular location is the cytoplasm. Functionally, may have roles in neural function and cellular differentiation. Ectopic expression promotes axonal regeneration, induces differentiation of fibroblast into myofibroblast, induces myofibroblast ameboid migration, augments motility of gliomas, and increases retinoic-acid regulation of lipid-droplet biogenesis. Down-regulates the expression of TGFB1 and TGFB2 but not of TGFB3. May play a role in the regulation of alveolar generation. The sequence is that of Neuronal regeneration-related protein (NREP) from Macaca fascicularis (Crab-eating macaque).